Consider the following 619-residue polypeptide: 1-deoxy-D-xylulose-5-phosphate synthase (619 aa).

Residues H80 and 121 to 123 contribute to the thiamine diphosphate site; that span reads GHS. Residue D152 coordinates Mg(2+). Thiamine diphosphate contacts are provided by residues 153-154, N181, Y288, and E370; that span reads GA. Residue N181 participates in Mg(2+) binding.

It belongs to the transketolase family. DXPS subfamily. In terms of assembly, homodimer. The cofactor is Mg(2+). Thiamine diphosphate is required as a cofactor.

It carries out the reaction D-glyceraldehyde 3-phosphate + pyruvate + H(+) = 1-deoxy-D-xylulose 5-phosphate + CO2. The protein operates within metabolic intermediate biosynthesis; 1-deoxy-D-xylulose 5-phosphate biosynthesis; 1-deoxy-D-xylulose 5-phosphate from D-glyceraldehyde 3-phosphate and pyruvate: step 1/1. Catalyzes the acyloin condensation reaction between C atoms 2 and 3 of pyruvate and glyceraldehyde 3-phosphate to yield 1-deoxy-D-xylulose-5-phosphate (DXP). The sequence is that of 1-deoxy-D-xylulose-5-phosphate synthase from Yersinia pseudotuberculosis serotype I (strain IP32953).